The chain runs to 325 residues: Zinc finger C2HC domain-containing protein 1A (325 aa).

The C2HC/C3H-type 1 zinc finger occupies 15–44 (ELLPCKICGRTFFPVALKKHGPICQKTATK). Residues C19, C22, H34, and C38 each contribute to the Zn(2+) site. Residues 43–83 (TKKRKTFDSSRQRAEGTDIPTVKPLKPRPEPPKKPSNWRRK) form a disordered region. The span at 48 to 58 (TFDSSRQRAEG) shows a compositional bias: basic and acidic residues. The C2HC/C3H-type 2 zinc-finger motif lies at 118–147 (DYIQCPYCQRRFNENAADRHINFCKEQAAR). Positions 122, 125, 137, and 141 each coordinate Zn(2+). Residues 150-260 (NKGKFSTDTK…NPAPGVLTNK (111 aa)) form a disordered region. 2 stretches are compositionally biased toward low complexity: residues 177 to 188 (SNSPGTASSGSS) and 197 to 216 (GKTV…SSLG). Phosphoserine is present on S223. T244 is subject to Phosphothreonine. S292 carries the phosphoserine modification.

This sequence belongs to the ZC2HC1 family. It depends on Zn(2+) as a cofactor.

The polypeptide is Zinc finger C2HC domain-containing protein 1A (ZC2HC1A) (Homo sapiens (Human)).